Here is a 1064-residue protein sequence, read N- to C-terminus: Lysine-specific demethylase 4A (1064 aa).

The residue at position 2 (A2) is an N-acetylalanine. Residues 14–56 (IMTFYPTMEEFRNFSRYIAYIESQGAHRAGLAKVVPPKEWKPR) enclose the JmjN domain. A 2-oxoglutarate-binding site is contributed by Y132. Residues 142–308 (EQHVDEWNIG…YGKQAVLCSC (167 aa)) enclose the JmjC domain. The Fe cation site is built by H188 and E190. The 2-oxoglutarate site is built by N198 and K206. Zn(2+) contacts are provided by C234 and H240. Residue K241 participates in 2-oxoglutarate binding. Fe cation is bound at residue H276. Residues C306 and C308 each contribute to the Zn(2+) site. Disordered stretches follow at residues 354–384 (LKDSGGLTPRAGSEECPEEDVEAADQGEEGD), 434–489 (LAPV…LDLS), 502–537 (SGSKKKSSSSLGSTSSQDSVSSDSETAESVSCQGQE), 549–573 (RGDGKAATGEPSVKKKRSAPRSISE), and 590–643 (NKKT…LSQL). Over residues 368 to 382 (ECPEEDVEAADQGEE) the composition is skewed to acidic residues. The segment covering 460 to 472 (TEVKFEELKNVKL) has biased composition (basic and acidic residues). Over residues 473–482 (EEEDEEDEPE) the composition is skewed to acidic residues. Residues 509–525 (SSSLGSTSSQDSVSSDS) are compositionally biased toward low complexity. S523 bears the Phosphoserine mark. The span at 528–537 (AESVSCQGQE) shows a compositional bias: polar residues. The span at 593-608 (TKGRRQPLSKLPRHHP) shows a compositional bias: basic residues. Positions 597 to 638 (RQPLSKLPRHHPLVLQECGSDDETSEQLTPEEEAEETEAWAK) are interaction with NCOR1. A compositionally biased stretch (acidic residues) spans 615 to 634 (GSDDETSEQLTPEEEAEETE). The segment at 709–767 (MCFTTTGCSTDINLSTPYLEEDGTSMLVSCKKCSVRVHASCYGVPPAKASEEWMCSRCS) adopts a PHD-type 1 zinc-finger fold. The C2HC pre-PHD-type zinc-finger motif lies at 772–805 (EEDCCLCSLRGGALQRANDDRWVHVSCAVAILEA). The PHD-type 2 zinc-finger motif lies at 828–885 (LKCVFCKKRRKRNAGCCVQCSHGRCPTAFHVSCAQAAGVMMQPDDWPFVVFITCFRHK). Tudor domains are found at residues 897 to 954 (LSIT…CLQL) and 955 to 1011 (GPPA…EELP).

This sequence belongs to the JHDM3 histone demethylase family. In terms of assembly, interacts with histone deacetylase proteins HDAC1, HDAC2 and HDAC3. Interacts with RB and NCOR1. Interacts with VRK1. It depends on Fe(2+) as a cofactor. Ubiquitinated by RNF8 and RNF168, leading to its degradation. Degradation promotes accessibility of H4K20me2 mark for DNA repair protein TP53BP1, which is then recruited. Also ubiquitinated by the SCF(FBXO22) complex; leading to proteasomal degradation. In terms of tissue distribution, widely expressed.

The protein localises to the nucleus. The enzyme catalyses N(6),N(6),N(6)-trimethyl-L-lysyl(9)-[histone H3] + 2 2-oxoglutarate + 2 O2 = N(6)-methyl-L-lysyl(9)-[histone H3] + 2 formaldehyde + 2 succinate + 2 CO2. It catalyses the reaction N(6),N(6),N(6)-trimethyl-L-lysyl(36)-[histone H3] + 2 2-oxoglutarate + 2 O2 = N(6)-methyl-L-lysyl(36)-[histone H3] + 2 formaldehyde + 2 succinate + 2 CO2. Functionally, histone demethylase that specifically demethylates 'Lys-9' and 'Lys-36' residues of histone H3, thereby playing a central role in histone code. Does not demethylate histone H3 'Lys-4', H3 'Lys-27' nor H4 'Lys-20'. Demethylates trimethylated H3 'Lys-9' and H3 'Lys-36' residue, while it has no activity on mono- and dimethylated residues. Demethylation of Lys residue generates formaldehyde and succinate. Participates in transcriptional repression of ASCL2 and E2F-responsive promoters via the recruitment of histone deacetylases and NCOR1, respectively. The polypeptide is Lysine-specific demethylase 4A (Kdm4a) (Mus musculus (Mouse)).